A 117-amino-acid chain; its full sequence is Flagellar transcriptional regulator FlhD (117 aa).

This sequence belongs to the FlhD family. Homodimer; disulfide-linked. Forms a heterohexamer composed of two FlhC and four FlhD subunits. Each FlhC binds a FlhD dimer, forming a heterotrimer, and a hexamer assembles by dimerization of two heterotrimers.

The protein resides in the cytoplasm. Functionally, functions in complex with FlhC as a master transcriptional regulator that regulates transcription of several flagellar and non-flagellar operons by binding to their promoter region. Activates expression of class 2 flagellar genes, including fliA, which is a flagellum-specific sigma factor that turns on the class 3 genes. Also regulates genes whose products function in a variety of physiological pathways. The sequence is that of Flagellar transcriptional regulator FlhD from Photorhabdus laumondii subsp. laumondii (strain DSM 15139 / CIP 105565 / TT01) (Photorhabdus luminescens subsp. laumondii).